Reading from the N-terminus, the 111-residue chain is Protein IDA-LIKE 5 (111 aa).

Positions 1-27 are cleaved as a signal peptide; it reads MGNKRIKAMMILVVMIMMVFSWRICEA. The segment covering 46–56 has biased composition (basic residues); the sequence is RRPNPRNHHHQ. Residues 46-65 are disordered; it reads RRPNPRNHHHQNQGFNGDDY.

In terms of tissue distribution, expressed mainly in flowers. Lower levels in buds and seedlings. Detected in vascular tissues and in hydathodes.

It localises to the secreted. It is found in the extracellular space. In terms of biological role, may be involved in floral abscission. The polypeptide is Protein IDA-LIKE 5 (IDL5) (Arabidopsis thaliana (Mouse-ear cress)).